Consider the following 319-residue polypeptide: Acetyl-coenzyme A carboxylase carboxyl transferase subunit alpha (319 aa).

Residues 39–293 form the CoA carboxyltransferase C-terminal domain; that stretch reads RLQKKSNDLT…KAVLEKQLHE (255 aa).

It belongs to the AccA family. As to quaternary structure, acetyl-CoA carboxylase is a heterohexamer composed of biotin carboxyl carrier protein (AccB), biotin carboxylase (AccC) and two subunits each of ACCase subunit alpha (AccA) and ACCase subunit beta (AccD).

Its subcellular location is the cytoplasm. It carries out the reaction N(6)-carboxybiotinyl-L-lysyl-[protein] + acetyl-CoA = N(6)-biotinyl-L-lysyl-[protein] + malonyl-CoA. Its pathway is lipid metabolism; malonyl-CoA biosynthesis; malonyl-CoA from acetyl-CoA: step 1/1. In terms of biological role, component of the acetyl coenzyme A carboxylase (ACC) complex. First, biotin carboxylase catalyzes the carboxylation of biotin on its carrier protein (BCCP) and then the CO(2) group is transferred by the carboxyltransferase to acetyl-CoA to form malonyl-CoA. This Neisseria gonorrhoeae (strain ATCC 700825 / FA 1090) protein is Acetyl-coenzyme A carboxylase carboxyl transferase subunit alpha.